A 914-amino-acid chain; its full sequence is Neutral alpha-glucosidase C (914 aa).

Asp-511 serves as the catalytic Nucleophile. The active site involves Glu-514. Asp-587 (proton donor) is an active-site residue.

It belongs to the glycosyl hydrolase 31 family.

The enzyme catalyses Hydrolysis of terminal, non-reducing (1-&gt;4)-linked alpha-D-glucose residues with release of alpha-D-glucose.. In terms of biological role, has alpha-glucosidase activity. This is Neutral alpha-glucosidase C (GANC) from Homo sapiens (Human).